Here is a 38-residue protein sequence, read N- to C-terminus: Histidine decarboxylase small chain (38 aa).

Heterohexamer of 3 large and 3 small chains. Pyruvate serves as cofactor.

It carries out the reaction L-histidine + H(+) = histamine + CO2. This chain is Histidine decarboxylase small chain, found in Micrococcus sp.